We begin with the raw amino-acid sequence, 456 residues long: Bifunctional protein GlmU (456 aa).

The segment at 1–229 is pyrophosphorylase; the sequence is MSTSPLSVVI…LSEVEGVNNR (229 aa). UDP-N-acetyl-alpha-D-glucosamine contacts are provided by residues 11–14, Lys25, Gln76, 81–82, 103–105, Gly140, Glu154, Asn169, and Asn227; these read LAAG, GT, and YGD. Asp105 serves as a coordination point for Mg(2+). A Mg(2+)-binding site is contributed by Asn227. The linker stretch occupies residues 230–250; the sequence is LQLSALERAYQQQQAQRLLLA. Positions 251 to 456 are N-acetyltransferase; that stretch reads GVMLTDPARF…SGWERPVKKK (206 aa). Residues Arg333 and Lys351 each coordinate UDP-N-acetyl-alpha-D-glucosamine. The Proton acceptor role is filled by His363. Residues Tyr366 and Asn377 each coordinate UDP-N-acetyl-alpha-D-glucosamine. Acetyl-CoA contacts are provided by residues Ala380, 386–387, Ser405, Ala423, and Arg440; that span reads NY.

The protein in the N-terminal section; belongs to the N-acetylglucosamine-1-phosphate uridyltransferase family. It in the C-terminal section; belongs to the transferase hexapeptide repeat family. As to quaternary structure, homotrimer. The cofactor is Mg(2+).

It is found in the cytoplasm. The enzyme catalyses alpha-D-glucosamine 1-phosphate + acetyl-CoA = N-acetyl-alpha-D-glucosamine 1-phosphate + CoA + H(+). It carries out the reaction N-acetyl-alpha-D-glucosamine 1-phosphate + UTP + H(+) = UDP-N-acetyl-alpha-D-glucosamine + diphosphate. It functions in the pathway nucleotide-sugar biosynthesis; UDP-N-acetyl-alpha-D-glucosamine biosynthesis; N-acetyl-alpha-D-glucosamine 1-phosphate from alpha-D-glucosamine 6-phosphate (route II): step 2/2. It participates in nucleotide-sugar biosynthesis; UDP-N-acetyl-alpha-D-glucosamine biosynthesis; UDP-N-acetyl-alpha-D-glucosamine from N-acetyl-alpha-D-glucosamine 1-phosphate: step 1/1. Its pathway is bacterial outer membrane biogenesis; LPS lipid A biosynthesis. Functionally, catalyzes the last two sequential reactions in the de novo biosynthetic pathway for UDP-N-acetylglucosamine (UDP-GlcNAc). The C-terminal domain catalyzes the transfer of acetyl group from acetyl coenzyme A to glucosamine-1-phosphate (GlcN-1-P) to produce N-acetylglucosamine-1-phosphate (GlcNAc-1-P), which is converted into UDP-GlcNAc by the transfer of uridine 5-monophosphate (from uridine 5-triphosphate), a reaction catalyzed by the N-terminal domain. This chain is Bifunctional protein GlmU, found in Edwardsiella ictaluri (strain 93-146).